Reading from the N-terminus, the 423-residue chain is Anthranilate 1,2-dioxygenase large subunit (423 aa).

Residues 53-168 (WNFVALEAEI…VDSYRGLVFA (116 aa)) enclose the Rieske domain. [2Fe-2S] cluster-binding residues include Cys95, His97, Cys115, and His118. Fe cation contacts are provided by His223, His228, and Asp370.

The protein belongs to the bacterial ring-hydroxylating dioxygenase alpha subunit family. As to quaternary structure, part of a multicomponent enzyme system composed of a reductase (AndAa), a ferredoxin (AndAb) and a two-subunit oxygenase component (AndAc and AndAd). Requires Fe cation as cofactor. It depends on [2Fe-2S] cluster as a cofactor.

It catalyses the reaction anthranilate + NADH + O2 + 3 H(+) = catechol + NH4(+) + CO2 + NAD(+). The enzyme catalyses anthranilate + NADPH + O2 + 3 H(+) = catechol + NH4(+) + CO2 + NADP(+). It functions in the pathway aromatic compound metabolism; anthranilate degradation via hydroxylation; catechol from anthranilate: step 1/1. Its function is as follows. Oxygenase component of anthranilate dioxygenase multicomponent enzyme system which catalyzes the incorporation of both atoms of molecular oxygen into anthranilate to form catechol. Can also act on benzoate and salicylate but not on 2-chlorobenzoate or o-toluate. This Burkholderia cepacia (Pseudomonas cepacia) protein is Anthranilate 1,2-dioxygenase large subunit.